Reading from the N-terminus, the 365-residue chain is Cyclin-D5-2 (365 aa).

The protein belongs to the cyclin family. Cyclin D subfamily.

This chain is Cyclin-D5-2 (CYCD5-2), found in Oryza sativa subsp. japonica (Rice).